The sequence spans 438 residues: Sphingomyelinase phosphodiesterase D (438 aa).

Positions 1–17 are cleaved as a signal peptide; the sequence is MKIILILVLVLVVSINA. Residues D27 and H29 each coordinate Zn(2+). N-linked (GlcNAc...) asparagine glycosylation occurs at N40. 2 residues coordinate Zn(2+): D111 and N148. N160 is a glycosylation site (N-linked (GlcNAc...) asparagine). Residue H247 participates in Zn(2+) binding. An N-linked (GlcNAc...) asparagine glycan is attached at N271. Residues H287 and H289 each coordinate Zn(2+). N-linked (GlcNAc...) asparagine glycans are attached at residues N338 and N359.

The protein belongs to the acid sphingomyelinase family. It depends on Zn(2+) as a cofactor.

The protein resides in the secreted. In Dictyostelium discoideum (Social amoeba), this protein is Sphingomyelinase phosphodiesterase D (sgmD).